The chain runs to 142 residues: Hemoglobin subunit alpha (142 aa).

S1 is modified (N-acetylserine). The 142-residue stretch at 1 to 142 (SLSDKDKNTV…LALALSERYR (142 aa)) folds into the Globin domain. O2 is bound at residue H59. H88 contacts heme b.

Belongs to the globin family. Heterotetramer of two alpha chains and two beta chains. Can form polymers. In terms of tissue distribution, red blood cells.

Involved in oxygen transport from gills to the various peripheral tissues. The chain is Hemoglobin subunit alpha (hba) from Chelidonichthys kumu (Bluefin gurnard).